The chain runs to 394 residues: NAD(P)H-quinone oxidoreductase subunit H 2 (394 aa).

Belongs to the complex I 49 kDa subunit family. As to quaternary structure, NDH-1 can be composed of about 15 different subunits; different subcomplexes with different compositions have been identified which probably have different functions.

Its subcellular location is the cell inner membrane. The enzyme catalyses a plastoquinone + NADH + (n+1) H(+)(in) = a plastoquinol + NAD(+) + n H(+)(out). It catalyses the reaction a plastoquinone + NADPH + (n+1) H(+)(in) = a plastoquinol + NADP(+) + n H(+)(out). In terms of biological role, NDH-1 shuttles electrons from an unknown electron donor, via FMN and iron-sulfur (Fe-S) centers, to quinones in the respiratory and/or the photosynthetic chain. The immediate electron acceptor for the enzyme in this species is believed to be plastoquinone. Couples the redox reaction to proton translocation, and thus conserves the redox energy in a proton gradient. Cyanobacterial NDH-1 also plays a role in inorganic carbon-concentration. The sequence is that of NAD(P)H-quinone oxidoreductase subunit H 2 from Gloeobacter violaceus (strain ATCC 29082 / PCC 7421).